The sequence spans 474 residues: Glycogen synthase (474 aa).

K15 provides a ligand contact to ADP-alpha-D-glucose.

The protein belongs to the glycosyltransferase 1 family. Bacterial/plant glycogen synthase subfamily.

The enzyme catalyses [(1-&gt;4)-alpha-D-glucosyl](n) + ADP-alpha-D-glucose = [(1-&gt;4)-alpha-D-glucosyl](n+1) + ADP + H(+). The protein operates within glycan biosynthesis; glycogen biosynthesis. In terms of biological role, synthesizes alpha-1,4-glucan chains using ADP-glucose. The protein is Glycogen synthase of Chlamydia trachomatis serovar A (strain ATCC VR-571B / DSM 19440 / HAR-13).